A 397-amino-acid polypeptide reads, in one-letter code: CCA-adding enzyme (397 aa).

Residues G27 and R30 each coordinate ATP. G27 and R30 together coordinate CTP. The Mg(2+) site is built by D40 and D42. ATP contacts are provided by R111, D154, R157, R160, and R163. Residues R111, D154, R157, R160, and R163 each contribute to the CTP site.

It belongs to the tRNA nucleotidyltransferase/poly(A) polymerase family. Bacterial CCA-adding enzyme type 3 subfamily. Homodimer. It depends on Mg(2+) as a cofactor.

It carries out the reaction a tRNA precursor + 2 CTP + ATP = a tRNA with a 3' CCA end + 3 diphosphate. The enzyme catalyses a tRNA with a 3' CCA end + 2 CTP + ATP = a tRNA with a 3' CCACCA end + 3 diphosphate. Catalyzes the addition and repair of the essential 3'-terminal CCA sequence in tRNAs without using a nucleic acid template. Adds these three nucleotides in the order of C, C, and A to the tRNA nucleotide-73, using CTP and ATP as substrates and producing inorganic pyrophosphate. tRNA 3'-terminal CCA addition is required both for tRNA processing and repair. Also involved in tRNA surveillance by mediating tandem CCA addition to generate a CCACCA at the 3' terminus of unstable tRNAs. While stable tRNAs receive only 3'-terminal CCA, unstable tRNAs are marked with CCACCA and rapidly degraded. This chain is CCA-adding enzyme, found in Bacillus licheniformis (strain ATCC 14580 / DSM 13 / JCM 2505 / CCUG 7422 / NBRC 12200 / NCIMB 9375 / NCTC 10341 / NRRL NRS-1264 / Gibson 46).